The sequence spans 289 residues: Pantothenate synthetase (289 aa).

33 to 40 (MGYLHEGH) provides a ligand contact to ATP. His40 functions as the Proton donor in the catalytic mechanism. Gln70 contributes to the (R)-pantoate binding site. Gln70 lines the beta-alanine pocket. 157 to 160 (GEKD) provides a ligand contact to ATP. (R)-pantoate is bound at residue Gln163. Residues Val186 and 194 to 197 (LSSR) each bind ATP.

Belongs to the pantothenate synthetase family. Homodimer.

Its subcellular location is the cytoplasm. It carries out the reaction (R)-pantoate + beta-alanine + ATP = (R)-pantothenate + AMP + diphosphate + H(+). The protein operates within cofactor biosynthesis; (R)-pantothenate biosynthesis; (R)-pantothenate from (R)-pantoate and beta-alanine: step 1/1. Functionally, catalyzes the condensation of pantoate with beta-alanine in an ATP-dependent reaction via a pantoyl-adenylate intermediate. The protein is Pantothenate synthetase of Anaeromyxobacter dehalogenans (strain 2CP-C).